Reading from the N-terminus, the 397-residue chain is Phosphoglycerate kinase (397 aa).

Substrate-binding positions include 21 to 23 (DFN), Arg37, 60 to 63 (HLGR), Arg119, and Arg152. ATP contacts are provided by residues Lys203, Gly294, Glu325, and 354–357 (GGDS).

The protein belongs to the phosphoglycerate kinase family. In terms of assembly, monomer.

It localises to the cytoplasm. The catalysed reaction is (2R)-3-phosphoglycerate + ATP = (2R)-3-phospho-glyceroyl phosphate + ADP. The protein operates within carbohydrate degradation; glycolysis; pyruvate from D-glyceraldehyde 3-phosphate: step 2/5. This Chlorobium phaeobacteroides (strain BS1) protein is Phosphoglycerate kinase.